A 202-amino-acid polypeptide reads, in one-letter code: Dephospho-CoA kinase (202 aa).

A DPCK domain is found at 6 to 202 (KVSITGDLSS…EYFYALKGAL (197 aa)). 14-19 (SSGKTE) contributes to the ATP binding site.

Belongs to the CoaE family.

It is found in the cytoplasm. The enzyme catalyses 3'-dephospho-CoA + ATP = ADP + CoA + H(+). The protein operates within cofactor biosynthesis; coenzyme A biosynthesis; CoA from (R)-pantothenate: step 5/5. Catalyzes the phosphorylation of the 3'-hydroxyl group of dephosphocoenzyme A to form coenzyme A. The chain is Dephospho-CoA kinase from Chlamydia pneumoniae (Chlamydophila pneumoniae).